The sequence spans 2715 residues: MKMKIQKKEKQLSNLKVLNHSPMSDASVNFDYKSPSPFDCSTDQEEKIEDVASHCLPQKDLYTAEEEAATLFPRKMTSHNGMEDSGGGGTGVKKKRKKKEPGDQEGAAKGSKDREPKPKRKREPKEPKEPRKAKEPKKAKEHKEPKQKDGAKKARKPREASGTKEAKEKRSCTDSAARTKSRKASKEQGPTPVEKKKKGKRKSETTVESLELDQGLTNPSLRSPEESTESTDSQKRRSGRQVKRRKYNEDLDFKVVDDDGETIAVLGAGRTSALSASTLAWQAEEPPEDDANIIEKILASKTVQEVHPGEPPFDLELFYVKYRNFSYLHCKWATMEELEKDPRIAQKIKRFRNKQAQMKHIFTEPDEDLFNPDYVEVDRILEVAHTKDAETGEEVTHYLVKWCSLPYEESTWELEEDVDPAKVKEFESLQVLPEIKHVERPASDSWQKLEKSREYKNSNQLREYQLEGMNWLLFNWYNRKNCILADEMGLGKTIQSITFLSEIFLRGIHGPFLIIAPLSTITNWEREFRTWTEMNAIVYHGSQISRQMIQQYEMVYRDAQGNPLSGVFKFHVVITTFEMILADCPELKKIHWSCVIIDEAHRLKNRNCKLLEGLKLMALEHKVLLTGTPLQNSVEELFSLLNFLEPSQFPSETAFLEEFGDLKTEEQVKKLQSILKPMMLRRLKDDVEKNLAPKQETIIEVELTNIQKKYYRAILEKNFSFLTKGANQHNMPNLINTMMELRKCCNHPYLINGAEEKILEDFRKTHSPDAPDFQLQAMIQAAGKLVLIDKLLPKLIAGGHKVLIFSQMVRCLDILEDYLIQRRYTYERIDGRVRGNLRQAAIDRFCKPDSDRFVFLLCTRAGGLGINLTAADTCIIFDSDWNPQNDLQAQARCHRIGQSKAVKVYRLITRNSYEREMFDKASLKLGLDKAVLQDINRKGGTNGVQQLSKMEVEDLLRKGAYGALMDEEDEGSKFCEEDIDQILQRRTHTITIQSEGKGSTFAKASFVASGNRTDISLDDPNFWQKWAKIAELDTEAKNEKESLVIDRPRVRKQTKHYNSFEEDELMEFSELDSDSDERPTRSRRLNDKARRYLRAECFRVEKNLLIFGWGRWKDILTHGRFKWHLNEKDMEMICRALLVYCVKHYKGDEKIKSFIWELITPTKDGQAQTLQNHSGLSAPVPRGRKGKKTKNQLLIPELKDADWLATCNPEVVLHDDGYKKHLKQHCNKVLLRVRMLYYLKAEILGEAAEKAFEGSPARELDVPLPDIDYMEIPVDWWDAEADKSLLIGVFKHGYERYNAMRADPALCFLEKVGMPDEKSLSAEQGVTDGTSDIPERGNTDKEDNAEDKVDGLQKQTESSSDGGDGVFSEKKDDSRAAQDGSDPDKSPWPVSSALTARLRRLVTVYQRCNRKELCRPEILGPGNQGYWVQEEMFRRTSEMDLINKEAQKRWTRREQADFYRTVSSFGVVYDQEKKTFDWTQFRIISRLDKKSDESLEQYFYSFVAMCRNVCRLPTWKDGGPPDTTIYVEPITEERAARTLYRIELLRKVREQVLKCPQLHERLQLCRPSLYLPVWWECGKHDRDLLIGTAKHGLNRTDCYIMNDPQLSFLDAYRNYAQHKRSGTQAPGNLCCLYQTNSKLYESLTYSQMSRTSESLENEPENLVRVESRDDHLSLPDVTCENFISKVQDVISINHDESLLPESLESMMYGKKVLSQEPSSFQESPSTNTESRKDVITISISKDGNCQSGGPEAEIASGPTFMGSLEAGGVAQANIKNGKHLLMSISKEGELCCSEAGQRPENIGQLEAKCLASPSLNPGNESGFVDMCSLSVCDSKRNLSSDQQLIDLLENKSLESKLILSQNHSDEEEEEEENEEENLAMAVGMGERPEVLHLTEPTTNISREKNQGFQDETKKGSLEVANQTPGLQRAFPAPAACQCHCKHMERWMHGLENDEFEIEKPKAYIPDLFKSKTNTIAMEGEPTAIPSQPFKVKHELLKEPWKESAEGQNVFPTYPLEGSELKSEDMDFENKDDYDRDGNCHSQDYPGKYSEEESKSSTSGITGDIGDELQEARAPTIAQLLQEKTLYSFSEWPKDRVIINRLDNICHVVLKGKWPSSQQYEPSGTLPTPVLTSSAGSRTSLSEPEAAEHSFSNGAALAAQIHKESFLAPVFTKDEQKHRRPYEFEVERDAKARGLEQFSATHGHTPIILNGWHGESAMDLSCSSEGSPGATSPFPVSASTPKIGAISSLQGALGMDLSGILQAGLIHPVTGQIVNGSLRRDDAATRRRRGRRKHVEGGMDLIFLKEQTLQAGILEVHEDPGQATLSTTHPEGPGPATSAPEPATAASSQAEKSIPSKSLLDWLRQQADYSLEVPGFGANFSDKPKQRRPRCKEPGKLDVSSLSGEERVPAIPKEPGLRGFLPENKFNHTLAEPILRDTGPRRRGRRPRSELLKAPSIVADSPSGMGPLFMNGLIAGMDLVGLQNMRNMPGIPLTGLVGFPAGFATMPTGEEVKSTLSMLPMMLPGMAAVPQMFGVGGLLSPPMATTCTSTAPASLSSTTKSGTAVTEKTAEDKPSSHDVKTDTLAEDKPGPGPFSDQSEPAITTSSPVAFNPFLIPGVSPGLIYPSMFLSPGMGMALPAMQQARHSEIVGLESQKRKKKKTKGDNPNSHPEPAPSCEREPSGDENCAEPSAPLPAEREHGAQAGEGALKDSNNDTN.

Residues 1 to 11 (MKMKIQKKEKQ) show a composition bias toward basic and acidic residues. Disordered regions lie at residues 1–30 (MKMK…SVNF) and 66–244 (EEAA…QVKR). The interval 1 to 747 (MKMKIQKKEK…MMELRKCCNH (747 aa)) is required for DNA-dependent ATPase activity. The segment covering 12-27 (LSNLKVLNHSPMSDAS) has biased composition (polar residues). Residues 123–172 (EPKEPKEPRKAKEPKKAKEHKEPKQKDGAKKARKPREASGTKEAKEKRSC) show a composition bias toward basic and acidic residues. Chromo domains are found at residues 292-343 (NIIE…KDPR) and 375-439 (VEVD…KHVE). Residues 473-647 (LFNWYNRKNC…FSLLNFLEPS (175 aa)) form the Helicase ATP-binding domain. 486–493 (DEMGLGKT) contacts ATP. The DEAH box signature appears at 598–601 (DEAH). Positions 787-956 (LIDKLLPKLI…LSKMEVEDLL (170 aa)) constitute a Helicase C-terminal domain. Positions 1318 to 1390 (KSLSAEQGVT…SDPDKSPWPV (73 aa)) are disordered. The segment covering 1321–1330 (SAEQGVTDGT) has biased composition (polar residues). Composition is skewed to basic and acidic residues over residues 1333 to 1351 (IPER…KVDG) and 1367 to 1376 (FSEKKDDSRA). In terms of domain architecture, Myb-like spans 1449 to 1503 (RWTRREQADFYRTVSSFGVVYDQEKKTFDWTQFRIISRLDKKSDESLEQYFYSFV). The span at 2027–2038 (FENKDDYDRDGN) shows a compositional bias: basic and acidic residues. 6 disordered regions span residues 2027 to 2063 (FENK…ITGD), 2116 to 2148 (SQQY…AAEH), 2321 to 2351 (QATL…QAEK), 2373 to 2422 (PGFG…FLPE), 2547 to 2602 (TSTA…PAIT), and 2648 to 2715 (VGLE…NDTN). The span at 2116 to 2141 (SQQYEPSGTLPTPVLTSSAGSRTSLS) shows a compositional bias: polar residues. Residues 2329-2346 (PEGPGPATSAPEPATAAS) are compositionally biased toward low complexity. The segment covering 2547 to 2560 (TSTAPASLSSTTKS) has biased composition (low complexity). 2 stretches are compositionally biased toward basic and acidic residues: residues 2567 to 2588 (KTAE…EDKP) and 2706 to 2715 (ALKDSNNDTN).

This sequence belongs to the SNF2/RAD54 helicase family. In terms of assembly, interacts with NFE2L2; involved in activation of the transcription. (Microbial infection) Interacts with the influenza A polymerase complex composed fo PB1, PB2 and PA. As to quaternary structure, (Microbial infection) Interacts (via N-terminus) with human papillomavirus protein E8^E2C (via C-terminus); this interaction induces transcriptional repression of the viral genome. As to expression, widely expressed.

It localises to the nucleus. It is found in the nucleoplasm. It catalyses the reaction ATP + H2O = ADP + phosphate + H(+). Functionally, ATP-dependent chromatin-remodeling factor. Regulates transcription by disrupting nucleosomes in a largely non-sliding manner which strongly increases the accessibility of chromatin; nucleosome disruption requires ATP. Activates transcription of specific genes in response to oxidative stress through interaction with NFE2L2. Its function is as follows. (Microbial infection) Acts as a transcriptional repressor of different viruses including influenza virus or papillomavirus. During influenza virus infection, the viral polymerase complex localizes CHD6 to inactive chromatin where it gets degraded in a proteasome independent-manner. This chain is Chromodomain-helicase-DNA-binding protein 6 (CHD6), found in Homo sapiens (Human).